The chain runs to 162 residues: NADH-quinone oxidoreductase subunit I (162 aa).

4Fe-4S ferredoxin-type domains follow at residues 53–83 and 93–122; these read LRRYPNGEERCIACKLCEAVCPAQAITIEAE and TRYDIDMTKCIYCGFCQEACPVDAIVEGPN. 8 residues coordinate [4Fe-4S] cluster: cysteine 63, cysteine 66, cysteine 69, cysteine 73, cysteine 102, cysteine 105, cysteine 108, and cysteine 112.

This sequence belongs to the complex I 23 kDa subunit family. In terms of assembly, NDH-1 is composed of 14 different subunits. Subunits NuoA, H, J, K, L, M, N constitute the membrane sector of the complex. [4Fe-4S] cluster serves as cofactor.

It localises to the cell inner membrane. It carries out the reaction a quinone + NADH + 5 H(+)(in) = a quinol + NAD(+) + 4 H(+)(out). Functionally, NDH-1 shuttles electrons from NADH, via FMN and iron-sulfur (Fe-S) centers, to quinones in the respiratory chain. The immediate electron acceptor for the enzyme in this species is believed to be ubiquinone. Couples the redox reaction to proton translocation (for every two electrons transferred, four hydrogen ions are translocated across the cytoplasmic membrane), and thus conserves the redox energy in a proton gradient. In Sphingopyxis alaskensis (strain DSM 13593 / LMG 18877 / RB2256) (Sphingomonas alaskensis), this protein is NADH-quinone oxidoreductase subunit I.